Consider the following 426-residue polypeptide: Adenylosuccinate synthetase 2 (426 aa).

GTP is bound by residues 12–18 (GDEGKGK) and 40–42 (GHT). D13 (proton acceptor) is an active-site residue. Mg(2+) is bound by residues D13 and G40. Residues 13-16 (DEGK), 38-41 (NAGH), R147, N223, T238, and R302 contribute to the IMP site. H41 functions as the Proton donor in the catalytic mechanism. 298–304 (TNTGRRR) contributes to the substrate binding site. GTP is bound by residues R304, 330-332 (KLD), and 412-414 (GVG).

The protein belongs to the adenylosuccinate synthetase family. As to quaternary structure, homodimer. Mg(2+) serves as cofactor.

It localises to the cytoplasm. The enzyme catalyses IMP + L-aspartate + GTP = N(6)-(1,2-dicarboxyethyl)-AMP + GDP + phosphate + 2 H(+). It participates in purine metabolism; AMP biosynthesis via de novo pathway; AMP from IMP: step 1/2. Functionally, plays an important role in the de novo pathway and in the salvage pathway of purine nucleotide biosynthesis. Catalyzes the first committed step in the biosynthesis of AMP from IMP. This chain is Adenylosuccinate synthetase 2, found in Laccaria bicolor (strain S238N-H82 / ATCC MYA-4686) (Bicoloured deceiver).